The following is a 165-amino-acid chain: Small ribosomal subunit protein uS5 (165 aa).

Positions 10–73 (LVEKLVSVDR…EAAKRNMITV (64 aa)) constitute an S5 DRBM domain.

Belongs to the universal ribosomal protein uS5 family. In terms of assembly, part of the 30S ribosomal subunit. Contacts proteins S4 and S8.

With S4 and S12 plays an important role in translational accuracy. In terms of biological role, located at the back of the 30S subunit body where it stabilizes the conformation of the head with respect to the body. This Psychrobacter sp. (strain PRwf-1) protein is Small ribosomal subunit protein uS5.